The following is a 516-amino-acid chain: GMP synthase [glutamine-hydrolyzing] (516 aa).

The Glutamine amidotransferase type-1 domain maps to 8–198; the sequence is KILILDFGSQ…VVNICGCDTL (191 aa). Cys-84 acts as the Nucleophile in catalysis. Residues His-172 and Glu-174 contribute to the active site. In terms of domain architecture, GMPS ATP-PPase spans 199–391; it reads WNIENIIEND…LGLPYNMLYR (193 aa). ATP is bound at residue 226 to 232; it reads SGGVDSS.

Homodimer.

The enzyme catalyses XMP + L-glutamine + ATP + H2O = GMP + L-glutamate + AMP + diphosphate + 2 H(+). The protein operates within purine metabolism; GMP biosynthesis; GMP from XMP (L-Gln route): step 1/1. Catalyzes the synthesis of GMP from XMP. The polypeptide is GMP synthase [glutamine-hydrolyzing] (Francisella tularensis subsp. novicida (strain U112)).